Here is a 55-residue protein sequence, read N- to C-terminus: Beta-toxin Cn7 (55 aa).

Residues 1–55 enclose the LCN-type CS-alpha/beta domain; sequence KEGYIVNYHDGCKYECYKLGDNDYCLRECKLRVGKGAGGYCYAFACWCTHLYEQA. Cystine bridges form between C16/C41, C25/C46, and C29/C48.

Belongs to the long (3 C-C) scorpion toxin superfamily. Sodium channel inhibitor family. Beta subfamily. As to expression, expressed by the venom gland.

It is found in the secreted. In terms of biological role, beta toxins bind voltage-independently at site-4 of sodium channels (Nav) and shift the voltage of activation toward more negative potentials thereby affecting sodium channel activation and promoting spontaneous and repetitive firing. The sequence is that of Beta-toxin Cn7 from Centruroides noxius (Mexican scorpion).